Consider the following 314-residue polypeptide: Ribosomal RNA small subunit methyltransferase H (314 aa).

S-adenosyl-L-methionine is bound by residues 32–34 (GGH), Asp-52, Phe-79, Asp-100, and Gln-107.

It belongs to the methyltransferase superfamily. RsmH family.

It is found in the cytoplasm. It carries out the reaction cytidine(1402) in 16S rRNA + S-adenosyl-L-methionine = N(4)-methylcytidine(1402) in 16S rRNA + S-adenosyl-L-homocysteine + H(+). Functionally, specifically methylates the N4 position of cytidine in position 1402 (C1402) of 16S rRNA. The protein is Ribosomal RNA small subunit methyltransferase H of Shouchella clausii (strain KSM-K16) (Alkalihalobacillus clausii).